Here is a 136-residue protein sequence, read N- to C-terminus: Small ribosomal subunit protein uS9 (136 aa).

This sequence belongs to the universal ribosomal protein uS9 family.

The chain is Small ribosomal subunit protein uS9 from Borreliella afzelii (strain PKo) (Borrelia afzelii).